We begin with the raw amino-acid sequence, 80 residues long: Serine protease inhibitor Kazal-type 1 (80 aa).

The first 23 residues, 1 to 23 (MKVAVIFLLSALALLSLAGNTFS), serve as a signal peptide directing secretion. The Kazal-like domain maps to 27–80 (TGKEASCHDAVAGCPRIYDPVCGTDGITYANECVLCFENRKRIEPVLIRKGGPC). Cystine bridges form between cysteine 33–cysteine 62, cysteine 40–cysteine 59, and cysteine 48–cysteine 80.

In the genital tract, expressed only in male accessory glands including seminal vesicle, coagulating gland and prostate.

Its subcellular location is the secreted. In terms of biological role, serine protease inhibitor which exhibits anti-trypsin activity. In the pancreas, protects against trypsin-catalyzed premature activation of zymogens. In the male reproductive tract, binds to sperm heads where it modulates sperm capacitance by inhibiting calcium uptake and nitrogen oxide (NO) production. This chain is Serine protease inhibitor Kazal-type 1, found in Mus musculus (Mouse).